A 128-amino-acid chain; its full sequence is MAIWQGTSKRKSTGAKLRLVTKKHKREMGRPAVETHISAVIKRKIVRCRGANLKVKLEKTNYANVFDQVNKVCKKVLVTKVIDNKANKHYIRRNVITKGAIIETEMGKAKVTSRPGQDGVVNAVLLSE.

This sequence belongs to the eukaryotic ribosomal protein eS8 family. As to quaternary structure, part of the 30S ribosomal subunit.

This Methanococcus vannielii (strain ATCC 35089 / DSM 1224 / JCM 13029 / OCM 148 / SB) protein is Small ribosomal subunit protein eS8.